Consider the following 388-residue polypeptide: Succinate--CoA ligase [ADP-forming] subunit beta (388 aa).

Residues 9-244 (KQLFARYGLP…PSQEDPREAQ (236 aa)) enclose the ATP-grasp domain. ATP-binding positions include K46, 53 to 55 (GRG), E99, T102, and E107. The Mg(2+) site is built by N199 and D213. Substrate-binding positions include N264 and 321-323 (GIV).

This sequence belongs to the succinate/malate CoA ligase beta subunit family. In terms of assembly, heterotetramer of two alpha and two beta subunits. Requires Mg(2+) as cofactor.

The catalysed reaction is succinate + ATP + CoA = succinyl-CoA + ADP + phosphate. The enzyme catalyses GTP + succinate + CoA = succinyl-CoA + GDP + phosphate. Its pathway is carbohydrate metabolism; tricarboxylic acid cycle; succinate from succinyl-CoA (ligase route): step 1/1. Functionally, succinyl-CoA synthetase functions in the citric acid cycle (TCA), coupling the hydrolysis of succinyl-CoA to the synthesis of either ATP or GTP and thus represents the only step of substrate-level phosphorylation in the TCA. The beta subunit provides nucleotide specificity of the enzyme and binds the substrate succinate, while the binding sites for coenzyme A and phosphate are found in the alpha subunit. The sequence is that of Succinate--CoA ligase [ADP-forming] subunit beta from Photorhabdus laumondii subsp. laumondii (strain DSM 15139 / CIP 105565 / TT01) (Photorhabdus luminescens subsp. laumondii).